A 316-amino-acid polypeptide reads, in one-letter code: Glutathione synthetase (316 aa).

The ATP-grasp domain occupies N124–E311. F151–G208 is a binding site for ATP. Positions 282 and 284 each coordinate Mg(2+).

This sequence belongs to the prokaryotic GSH synthase family. Mg(2+) is required as a cofactor. The cofactor is Mn(2+).

It carries out the reaction gamma-L-glutamyl-L-cysteine + glycine + ATP = glutathione + ADP + phosphate + H(+). It participates in sulfur metabolism; glutathione biosynthesis; glutathione from L-cysteine and L-glutamate: step 2/2. This is Glutathione synthetase from Xanthomonas campestris pv. campestris (strain ATCC 33913 / DSM 3586 / NCPPB 528 / LMG 568 / P 25).